Reading from the N-terminus, the 335-residue chain is Lipoyl synthase (335 aa).

[4Fe-4S] cluster contacts are provided by cysteine 55, cysteine 60, cysteine 66, cysteine 81, cysteine 85, cysteine 88, and serine 292. A Radical SAM core domain is found at tryptophan 67–leucine 281.

It belongs to the radical SAM superfamily. Lipoyl synthase family. Requires [4Fe-4S] cluster as cofactor.

The protein resides in the cytoplasm. It catalyses the reaction [[Fe-S] cluster scaffold protein carrying a second [4Fe-4S](2+) cluster] + N(6)-octanoyl-L-lysyl-[protein] + 2 oxidized [2Fe-2S]-[ferredoxin] + 2 S-adenosyl-L-methionine + 4 H(+) = [[Fe-S] cluster scaffold protein] + N(6)-[(R)-dihydrolipoyl]-L-lysyl-[protein] + 4 Fe(3+) + 2 hydrogen sulfide + 2 5'-deoxyadenosine + 2 L-methionine + 2 reduced [2Fe-2S]-[ferredoxin]. It participates in protein modification; protein lipoylation via endogenous pathway; protein N(6)-(lipoyl)lysine from octanoyl-[acyl-carrier-protein]: step 2/2. Catalyzes the radical-mediated insertion of two sulfur atoms into the C-6 and C-8 positions of the octanoyl moiety bound to the lipoyl domains of lipoate-dependent enzymes, thereby converting the octanoylated domains into lipoylated derivatives. This Kocuria rhizophila (strain ATCC 9341 / DSM 348 / NBRC 103217 / DC2201) protein is Lipoyl synthase.